The primary structure comprises 262 residues: ELL-associated factor 2 (262 aa).

The segment at 17-104 is necessary for interaction with ELL; it reads LKLGESFEKQ…TGECRLEKLS (88 aa). A phosphoserine mark is found at Ser-146, Ser-151, and Ser-154. The interval 170-237 is disordered; the sequence is MDQMSSCDSS…EADATCHRLQ (68 aa). The segment covering 174 to 192 has biased composition (low complexity); sequence SSCDSSSDSKSSSSSSSED. A necessary for transactivation activity region spans residues 177–262; sequence DSSSDSKSSS…LSESESDSED (86 aa). Over residues 193–202 the composition is skewed to acidic residues; sequence SSSDSEDDDQ. The segment covering 227–237 has biased composition (basic and acidic residues); sequence SEADATCHRLQ. The interval 248 to 262 is necessary for interaction with TCEA1 and transactivation activity; sequence RSDLQLSESESDSED.

It belongs to the EAF family. Component of the super elongation complex (SEC), at least composed of EAF1, EAF2, CDK9, MLLT3/AF9, AFF (AFF1 or AFF4), the P-TEFb complex and ELL (ELL, ELL2 or ELL3). Interacts with ELL and ELL2. Isoform 1 and isoform 2 interact with TCEA1. As to expression, isoform 1 is expressed in ovary, uterus, mammary glands, brain, spleen, liver, lung, thymus, kidney, skeletal muscle, skin and testis. Isoform 2 is expressed in kidney.

It is found in the nucleus speckle. Its function is as follows. Acts as a transcriptional transactivator of ELL and ELL2 elongation activities. Acts as a transcriptional transactivator of TCEA1 elongation activity. The polypeptide is ELL-associated factor 2 (Eaf2) (Mus musculus (Mouse)).